Consider the following 344-residue polypeptide: RNA 3'-terminal phosphate cyclase (344 aa).

Residues glutamine 103 and 283 to 287 each bind ATP; that span reads HLADQ. The active-site Tele-AMP-histidine intermediate is histidine 308.

It belongs to the RNA 3'-terminal cyclase family. Type 1 subfamily.

The protein localises to the cytoplasm. The catalysed reaction is a 3'-end 3'-phospho-ribonucleotide-RNA + ATP = a 3'-end 2',3'-cyclophospho-ribonucleotide-RNA + AMP + diphosphate. Functionally, catalyzes the conversion of 3'-phosphate to a 2',3'-cyclic phosphodiester at the end of RNA. The mechanism of action of the enzyme occurs in 3 steps: (A) adenylation of the enzyme by ATP; (B) transfer of adenylate to an RNA-N3'P to produce RNA-N3'PP5'A; (C) and attack of the adjacent 2'-hydroxyl on the 3'-phosphorus in the diester linkage to produce the cyclic end product. The biological role of this enzyme is unknown but it is likely to function in some aspects of cellular RNA processing. The protein is RNA 3'-terminal phosphate cyclase of Salmonella paratyphi C (strain RKS4594).